Here is a 395-residue protein sequence, read N- to C-terminus: MEPGTDVRRVLVIGAGAAGLLIAQVLKKHGVPCTVFEQDTKADARPRDWNYGIYWAQSYLAECLPPELVSQLESAQVDSHTPSGSDILPTFNLATGEPLISVSAPYSYRLQRRKFLNLISTGIDIQYGKRLTMVDSDNKTVTAVFEDSSQATGNLLIGTEGAHSRVREYLLGKERAAVIPSRIVASATVSRLPEREVSALRKLHPRYCIAIHPDGYFNWLGIHDEAAQSKDCTFMIILSWISESDTGLSGTAIAADLKERANTFGEPFRTVLQSIPSETTFWHNRLSSWPTQPWNSHNGTVTLAGDAAHPMTFHRGQGLNNAITDAAYFGRQLAALDTKSTESLSAVVTAFEEELWKRGNEAVTQSDINSLSVHNWEELKSSPLFTSGLKQRSST.

The N-terminal stretch at 1-23 is a signal peptide; the sequence is MEPGTDVRRVLVIGAGAAGLLIA. Residues glutamate 37, glycine 52, and arginine 112 each contribute to the FAD site. Asparagine 138 and asparagine 298 each carry an N-linked (GlcNAc...) asparagine glycan. Residue aspartate 306 coordinates FAD.

It belongs to the paxM FAD-dependent monooxygenase family. It depends on FAD as a cofactor.

It participates in mycotoxin biosynthesis. In terms of biological role, FAD-dependent monooxygenase; part of the gene cluster that mediates the biosynthesis of the mycotoxin cyclochlorotine, a hepatotoxic and carcinogenic cyclic chlorinated pentapeptide. The function of cctM within the pathway, if any, remains undetermined. The NRPS cctN initially catalyzes the condensation of L-serine (Ser), Pro, L-2-aminobutyrate (2Abu), Ser, and beta-Phe in this order to produce isocyclotine. After the dichlorination of Pro2 catalyzed by cctP2 to produce isocyclochlorotine, the cctO-mediated transacylation of isocyclochlorotine can furnish cyclochlorotine. The subsequent hydroxylation of cyclochlorotine by cctR yields hydroxycyclochlorotine as the final product. CctP1 probably acts as a phenylalanine aminomutase and provides the uncommon building block beta-Phe. Furthermore, 2Abu can be synthesized from threonine by one of the threonine dehydratases and transaminases localized outside of the cluster. The functions of the remaining proteins encoded by the cluster, cctM and cctT, have not been identified yet. The chain is FAD-dependent monooxygenase cctM from Talaromyces islandicus (Penicillium islandicum).